The chain runs to 184 residues: MQTVLKDAEDRMKKALAALDKEFSRLRTGRATTSLLDGVRVDYYGTATQLDQLASVATPDSRTITIQPWDRKAFADIEKAILKSGLGLTPVNDGKIIRISIPPLTEDRRKDLVKVAKKYVEEAKVAMRNVRRDANELLKKKKNDKAISEDDQRKGQDDVQKLTDNYIVKTDEAFSKKEKEIMEI.

The disordered stretch occupies residues 141-161 (KKNDKAISEDDQRKGQDDVQK).

Belongs to the RRF family.

Its subcellular location is the cytoplasm. Functionally, responsible for the release of ribosomes from messenger RNA at the termination of protein biosynthesis. May increase the efficiency of translation by recycling ribosomes from one round of translation to another. This chain is Ribosome-recycling factor, found in Solidesulfovibrio magneticus (strain ATCC 700980 / DSM 13731 / RS-1) (Desulfovibrio magneticus).